Consider the following 315-residue polypeptide: KH domain-containing protein At5g56140 (315 aa).

2 disordered regions span residues 1 to 53 (MMMM…GGLR) and 136 to 158 (SQFP…SPGS). Gly residues predominate over residues 7 to 28 (LGGGGGGGGGSGGGIGGGGGGR). 2 stretches are compositionally biased toward polar residues: residues 31–53 (TYSS…GGLR) and 136–146 (SQFPSERSVPS). The 68-residue stretch at 171 to 238 (DIPVDNYPNF…EHLNEPLHIL (68 aa)) folds into the KH domain. Residues 289 to 315 (REEGSPMSGSVSPYNSLGMKRAKTREG) form a disordered region. Residue serine 300 is modified to Phosphoserine.

The protein localises to the nucleus. The chain is KH domain-containing protein At5g56140 from Arabidopsis thaliana (Mouse-ear cress).